Consider the following 223-residue polypeptide: Neurotrophic factor BDNF precursor form (223 aa).

A signal peptide spans 1–5; that stretch reads SCMKA. Positions 6 to 114 are excised as a propeptide; that stretch reads APMKEVGVRG…AANMSXRVRR (109 aa). N107 carries an N-linked (GlcNAc...) asparagine glycan. Disulfide bonds link C127–C194 and C172–C223.

It belongs to the NGF-beta family.

The protein localises to the secreted. In terms of biological role, promotes the survival of neuronal populations that are all located either in the central nervous system or directly connected to it. The polypeptide is Neurotrophic factor BDNF precursor form (BDNF) (Eryx jayakari (Arabian sand boa)).